We begin with the raw amino-acid sequence, 112 residues long: Cytochrome c (112 aa).

Residues cysteine 23, cysteine 26, and histidine 27 each contribute to the heme c site. An N6,N6,N6-trimethyllysine modification is found at lysine 81. Methionine 89 lines the heme c pocket. An N6,N6,N6-trimethyllysine modification is found at lysine 95.

Belongs to the cytochrome c family. In terms of processing, binds 1 heme c group covalently per subunit.

Its subcellular location is the mitochondrion intermembrane space. Its function is as follows. Electron carrier protein. The oxidized form of the cytochrome c heme group can accept an electron from the heme group of the cytochrome c1 subunit of cytochrome reductase. Cytochrome c then transfers this electron to the cytochrome oxidase complex, the final protein carrier in the mitochondrial electron-transport chain. The protein is Cytochrome c (CC-1) of Arabidopsis thaliana (Mouse-ear cress).